Here is a 56-residue protein sequence, read N- to C-terminus: Defensin-1 (56 aa).

The first 24 residues, 1–24 (MKAIVVLLILALILCLYAMTTVEG), serve as a signal peptide directing secretion. 3 disulfide bridges follow: Cys26–Cys45, Cys31–Cys53, and Cys35–Cys55.

The protein localises to the secreted. In terms of biological role, antibacterial protein involved in the immune response to septic injury. When combined with 14.026 kDa and 14.059 kDa hemolymph antimicrobial peptides, it has a strong cooperative activity against the Gram-positive bacteria B.subtilis and S.aureus, and against the Gram-negative bacteria E.coli DH5-alpha and K.pneumoniae ATCC 138833. Does not show detectable antibacterial activity when present alone. Has no hemolytic activity in human erythrocytes. In Centruroides limpidus (Mexican scorpion), this protein is Defensin-1.